A 372-amino-acid polypeptide reads, in one-letter code: 4-hydroxybenzoate polyprenyltransferase, mitochondrial (372 aa).

The transit peptide at 1–42 directs the protein to the mitochondrion; it reads MFIWQRKSILLGRSILGSGRVTVAGIIGSSRKRYTSSSSSSS. 7 helical membrane passes run 92 to 112, 114 to 134, 171 to 191, 193 to 213, 229 to 249, 298 to 318, and 352 to 372; these read PVGT…GAMM, GATL…ALVM, ALVF…LLPA, CWWL…FKRF, ALLG…PLYL, IALL…GFIG, and TGLY…FGFL.

The protein belongs to the UbiA prenyltransferase family. It depends on Mg(2+) as a cofactor.

Its subcellular location is the mitochondrion inner membrane. The enzyme catalyses an all-trans-polyprenyl diphosphate + 4-hydroxybenzoate = a 4-hydroxy-3-(all-trans-polyprenyl)benzoate + diphosphate. It participates in cofactor biosynthesis; ubiquinone biosynthesis. Functionally, catalyzes the prenylation of para-hydroxybenzoate (PHB) with an all-trans polyprenyl group. Mediates the second step in the final reaction sequence of coenzyme Q (CoQ) biosynthesis, which is the condensation of the polyisoprenoid side chain with PHB, generating the first membrane-bound Q intermediate. This chain is 4-hydroxybenzoate polyprenyltransferase, mitochondrial, found in Saccharomyces cerevisiae (strain ATCC 204508 / S288c) (Baker's yeast).